A 692-amino-acid polypeptide reads, in one-letter code: Proprotein convertase subtilisin/kexin type 9 (692 aa).

A signal peptide spans Met-1 to Ala-30. A propeptide spanning residues Gln-31 to Gln-152 is cleaved from the precursor. The residue at position 38 (Tyr-38) is a Sulfotyrosine. The residue at position 47 (Ser-47) is a Phosphoserine. The Inhibitor I9 domain maps to Thr-77–Val-149. The Peptidase S8 domain maps to Pro-155–Leu-444. Residues Asp-186 and His-226 each act as charge relay system in the active site. Intrachain disulfides connect Cys-223-Cys-255 and Cys-323-Cys-358. Ser-386 functions as the Charge relay system in the catalytic mechanism. The segment at Arg-450 to Gln-692 is C-terminal domain. 3 disulfides stabilise this stretch: Cys-457–Cys-527, Cys-477–Cys-526, and Cys-486–Cys-509. Asn-533 is a glycosylation site (N-linked (GlcNAc...) asparagine). Intrachain disulfides connect Cys-534-Cys-601, Cys-552-Cys-600, Cys-562-Cys-588, Cys-608-Cys-679, Cys-626-Cys-678, and Cys-635-Cys-654. Position 688 is a phosphoserine (Ser-688).

It belongs to the peptidase S8 family. As to quaternary structure, monomer. Can self-associate to form dimers and higher multimers which may have increased LDLR degrading activity. The precursor protein but not the mature protein may form multimers. Interacts with APOB, VLDLR, LRP8/APOER2 and BACE1. The full-length immature form (pro-PCSK9) interacts with SCNN1A, SCNN1B and SCNN1G. The pro-PCSK9 form (via C-terminal domain) interacts with LDLR. Interacts (via the C-terminal domain) with ANXA2 (via repeat Annexin 1); the interaction inhibits the degradation of LDLR. The cofactor is Ca(2+). Cleavage by furin and PCSK5 generates a truncated inactive protein that is unable to induce LDLR degradation. Post-translationally, undergoes autocatalytic cleavage in the endoplasmic reticulum to release the propeptide from the N-terminus and the cleavage of the propeptide is strictly required for its maturation and activation. The cleaved propeptide however remains associated with the catalytic domain through non-covalent interactions, preventing potential substrates from accessing its active site. As a result, it is secreted from cells as a propeptide-containing, enzymatically inactive protein. In terms of processing, phosphorylation protects the propeptide against proteolysis.

It localises to the cytoplasm. It is found in the secreted. The protein localises to the endosome. The protein resides in the lysosome. Its subcellular location is the cell surface. It localises to the endoplasmic reticulum. It is found in the golgi apparatus. Its activity is regulated as follows. Its proteolytic activity is autoinhibited by the non-covalent binding of the propeptide to the catalytic domain. Inhibited by EGTA. Its function is as follows. Crucial player in the regulation of plasma cholesterol homeostasis. Binds to low-density lipid receptor family members: low density lipoprotein receptor (LDLR), very low density lipoprotein receptor (VLDLR), apolipoprotein E receptor (LRP1/APOER) and apolipoprotein receptor 2 (LRP8/APOER2), and promotes their degradation in intracellular acidic compartments. Acts via a non-proteolytic mechanism to enhance the degradation of the hepatic LDLR through a clathrin LDLRAP1/ARH-mediated pathway. May prevent the recycling of LDLR from endosomes to the cell surface or direct it to lysosomes for degradation. Can induce ubiquitination of LDLR leading to its subsequent degradation. Inhibits intracellular degradation of APOB via the autophagosome/lysosome pathway in a LDLR-independent manner. Involved in the disposal of non-acetylated intermediates of BACE1 in the early secretory pathway. Inhibits epithelial Na(+) channel (ENaC)-mediated Na(+) absorption by reducing ENaC surface expression primarily by increasing its proteasomal degradation. Regulates neuronal apoptosis via modulation of LRP8/APOER2 levels and related anti-apoptotic signaling pathways. The protein is Proprotein convertase subtilisin/kexin type 9 (PCSK9) of Macaca nemestrina (Pig-tailed macaque).